A 287-amino-acid polypeptide reads, in one-letter code: Nucleotide-binding protein TGRD_433 (287 aa).

9–16 (GMSGAGKS) provides a ligand contact to ATP. Position 60-63 (60-63 (DSRA)) interacts with GTP.

It belongs to the RapZ-like family.

Displays ATPase and GTPase activities. In Endomicrobium trichonymphae, this protein is Nucleotide-binding protein TGRD_433.